A 253-amino-acid chain; its full sequence is Homeotic protein ultrabithorax (253 aa).

Low complexity predominate over residues 125–141 (GNTSNGSNAPNAANGQN). Positions 125–193 (GNTSNGSNAP…GNGTAGGVPQ (69 aa)) are disordered. Residues 176-189 (RGGGSAGGGNGTAG) show a composition bias toward gly residues. The Antp-type hexapeptide signature appears at 237–242 (FYPWMA).

This sequence belongs to the Antp homeobox family.

The protein resides in the nucleus. Functionally, sequence-specific transcription factor which is part of a developmental regulatory system that provides cells with specific positional identities on the anterior-posterior axis. Binds the consensus region 5'-TTAAT[GT][GA]-3'. This homeotic protein controls development of the cells in the posterior thoracic and first abdominal segments. It activates the synthesis of the decapentaplegic (DPP) growth factor. In Drosophila funebris (Fruit fly), this protein is Homeotic protein ultrabithorax (Ubx).